The primary structure comprises 351 residues: GMP reductase (351 aa).

108–131 (EDFVKLKQILSLSSKLKYICIDVA) provides a ligand contact to NADP(+). K(+)-binding residues include G181 and G183. The active-site Thioimidate intermediate is C186. 216–239 (IISDGGCVVSGDIAKAFGGGADFV) lines the NADP(+) pocket.

This sequence belongs to the IMPDH/GMPR family. GuaC type 1 subfamily. Homotetramer.

The catalysed reaction is IMP + NH4(+) + NADP(+) = GMP + NADPH + 2 H(+). Catalyzes the irreversible NADPH-dependent deamination of GMP to IMP. It functions in the conversion of nucleobase, nucleoside and nucleotide derivatives of G to A nucleotides, and in maintaining the intracellular balance of A and G nucleotides. The sequence is that of GMP reductase (guaC) from Buchnera aphidicola subsp. Baizongia pistaciae (strain Bp).